We begin with the raw amino-acid sequence, 471 residues long: Adenosylhomocysteinase (471 aa).

Substrate-binding residues include Thr60, Asp135, and Glu196. Residue 197-199 (TTT) participates in NAD(+) binding. 2 residues coordinate substrate: Lys226 and Asp230. NAD(+)-binding positions include Asn231, 260–265 (GYGDVG), Glu283, Asn318, 339–341 (IGH), and Asn387.

It belongs to the adenosylhomocysteinase family. NAD(+) is required as a cofactor.

The protein localises to the cytoplasm. It carries out the reaction S-adenosyl-L-homocysteine + H2O = L-homocysteine + adenosine. The protein operates within amino-acid biosynthesis; L-homocysteine biosynthesis; L-homocysteine from S-adenosyl-L-homocysteine: step 1/1. May play a key role in the regulation of the intracellular concentration of adenosylhomocysteine. This is Adenosylhomocysteinase from Pelodictyon phaeoclathratiforme (strain DSM 5477 / BU-1).